The primary structure comprises 143 residues: Nucleoside diphosphate kinase (143 aa).

ATP-binding residues include K11, F59, R87, T93, R104, and N114. H117 functions as the Pros-phosphohistidine intermediate in the catalytic mechanism.

It belongs to the NDK family. Homotetramer. The cofactor is Mg(2+).

It localises to the cytoplasm. The enzyme catalyses a 2'-deoxyribonucleoside 5'-diphosphate + ATP = a 2'-deoxyribonucleoside 5'-triphosphate + ADP. It carries out the reaction a ribonucleoside 5'-diphosphate + ATP = a ribonucleoside 5'-triphosphate + ADP. In terms of biological role, major role in the synthesis of nucleoside triphosphates other than ATP. The ATP gamma phosphate is transferred to the NDP beta phosphate via a ping-pong mechanism, using a phosphorylated active-site intermediate. This Shewanella baltica (strain OS223) protein is Nucleoside diphosphate kinase.